We begin with the raw amino-acid sequence, 70 residues long: Large ribosomal subunit protein eL38 (70 aa).

Belongs to the eukaryotic ribosomal protein eL38 family.

This Drosophila melanogaster (Fruit fly) protein is Large ribosomal subunit protein eL38 (RpL38).